A 120-amino-acid chain; its full sequence is Synaptobrevin (120 aa).

The disordered stretch occupies residues 1-38 (MSAPPSGPAPDAQGGAPGQPTGPPGAPPNTTSNRRLQQ). Residues 1–98 (MSAPPSGPAP…KRKYWWKNCK (98 aa)) lie on the Cytoplasmic side of the membrane. The span at 29-38 (NTTSNRRLQQ) shows a compositional bias: polar residues. The region spanning 35–95 (RLQQTQAQVE…AKLKRKYWWK (61 aa)) is the v-SNARE coiled-coil homology domain. Residues 99 to 118 (MMIMLGGIGAIIVIVIIIYF) traverse the membrane as a helical; Anchor for type IV membrane protein segment. The Vesicular segment spans residues 119 to 120 (FT).

Belongs to the synaptobrevin family. Nervous system specific.

The protein localises to the cytoplasmic vesicle. The protein resides in the secretory vesicle. Its subcellular location is the synaptic vesicle membrane. It localises to the synapse. It is found in the synaptosome. Its function is as follows. This protein may play a role in packaging, transport or release of neurotransmitters. This is Synaptobrevin from Tetronarce californica (Pacific electric ray).